Consider the following 422-residue polypeptide: Tyrosine--tRNA ligase 1 (422 aa).

Residue tyrosine 36 participates in L-tyrosine binding. Positions 41–50 match the 'HIGH' region motif; it reads PTAGSLHIGH. L-tyrosine-binding residues include tyrosine 173 and glutamine 177. The short motif at 233 to 237 is the 'KMSKS' region element; it reads KFGKT. Lysine 236 contributes to the ATP binding site. Residues 355 to 419 form the S4 RNA-binding domain; sequence SDVVTLLLET…GKKQFAMVKL (65 aa).

The protein belongs to the class-I aminoacyl-tRNA synthetase family. TyrS type 1 subfamily. As to quaternary structure, homodimer.

The protein resides in the cytoplasm. It catalyses the reaction tRNA(Tyr) + L-tyrosine + ATP = L-tyrosyl-tRNA(Tyr) + AMP + diphosphate + H(+). In terms of biological role, catalyzes the attachment of tyrosine to tRNA(Tyr) in a two-step reaction: tyrosine is first activated by ATP to form Tyr-AMP and then transferred to the acceptor end of tRNA(Tyr). This chain is Tyrosine--tRNA ligase 1, found in Vibrio vulnificus (strain CMCP6).